Reading from the N-terminus, the 213-residue chain is Ribosomal RNA large subunit methyltransferase E (213 aa).

Gly60, Trp62, Asp80, Asp96, and Asp121 together coordinate S-adenosyl-L-methionine. The Proton acceptor role is filled by Lys161.

The protein belongs to the class I-like SAM-binding methyltransferase superfamily. RNA methyltransferase RlmE family.

It localises to the cytoplasm. The catalysed reaction is uridine(2552) in 23S rRNA + S-adenosyl-L-methionine = 2'-O-methyluridine(2552) in 23S rRNA + S-adenosyl-L-homocysteine + H(+). Specifically methylates the uridine in position 2552 of 23S rRNA at the 2'-O position of the ribose in the fully assembled 50S ribosomal subunit. The sequence is that of Ribosomal RNA large subunit methyltransferase E from Xylella fastidiosa (strain M23).